Consider the following 150-residue polypeptide: Putative STAG3-like protein 4 (150 aa).

The protein belongs to the SCC3 family.

The polypeptide is Putative STAG3-like protein 4 (STAG3L4) (Homo sapiens (Human)).